We begin with the raw amino-acid sequence, 572 residues long: DNA polymerase (572 aa).

The 3'-5' exonuclease and strand displacement activities stretch occupies residues 1–222 (MPRKMFSCDF…LPMDKEIRRA (222 aa)). The tract at residues 56–66 (YFHNLKFDGAF) is interaction with the primer terminal protein. 2 residues coordinate Mg(2+): Asp142 and Asp166. The tract at residues 223–226 (YRGG) is DNA-binding; Involved in the formation of a stable complex between TP and phi29 DNA polymerase. An initiation, polymerization and pyrophosphorolytic activities region spans residues 227–572 (FTWLNDKYKE…VLVDSVFTIK (346 aa)). Mg(2+) is bound by residues Asp246 and Val247. 5-methyl-UTP is bound by residues Tyr251, Lys368, and Lys380. Residues Asp453 and Asp455 each contribute to the Mg(2+) site. Asp455 serves as a coordination point for 5-methyl-UTP.

Belongs to the DNA polymerase type-B family. Interacts with the primer terminal protein; this interaction allows the initiation of TP-primed DNA replication at both viral DNA ends. Interacts with DNA. Mg(2+) serves as cofactor.

The catalysed reaction is DNA(n) + a 2'-deoxyribonucleoside 5'-triphosphate = DNA(n+1) + diphosphate. Its function is as follows. Polymerase responsible for protein-primed viral DNA replication by strand displacement with high processivity and fidelity. To start replication, the DNA polymerase forms a heterodimer with a free primer terminal protein (TP), recognizes the replication origins at both 5' ends of the linear chromosome, and initiates replication using as primer the OH-group of Ser-232 of the TP. This polymerase possesses three enzymatic activities: DNA synthesis (polymerase), primer terminal protein (TP) deoxynucleotidylation, which is the formation of a covalent linkage (phosphoester) between the hydroxyl group of a specific serine residue in TP and 5'-dAMP, a reaction directed by the second T at the 3' end, and 3' to 5' exonuclease activity. Exonuclease activity has a proofreading purpose. In Bacillus phage B103 (Bacteriophage B103), this protein is DNA polymerase (2).